Here is a 584-residue protein sequence, read N- to C-terminus: MSTSDGVPSTGGRSPEELASQVRLLEDEVSDLRRRLTESPGGSRGLELRLADAQRSLAGVTSQNERLAQTLREARDQIMKLKEEVDRLAQPPAGFGTFLARNDDDSIDVFTGGRKLRVNVSPSVDLDTLQRGQEVMLNEALNVVAALEFEEVGEVVMFKELLADGDRALVIANADEERVVRLAEPLRGDTIRAGDSLLLDSRAGYVYEKVPKSEVEELVLEEVPDIAYESIGGLAGQIEQIRDAVELPYLHPELFKEHQLKPPKGVLLYGPPGCGKTLIAKAVANSLAKKVAAKTGQEGKSYFLNIKGPELLNKYVGETERHIRLVFQRAREKASGGTPVIVFFDEMDSLFRTRGSGVSSDVENTIVPQLLSEIDGVEALENVLVIGASNREDMIDPAILRPGRLDVKIKIERPDAESARDIFSKYLTTTLPLHADDLSEFGGDRDACVGGMIRATVERMYTETEENRFLEVTYANGDKEVLYFKDFNSGAMIQNIVDRAKKMAIKDFLDHDQHGLRVSHLLQACVDEFKENEDLPNTTNPDDWARISGKKGERIVFIRTLITGKQGTEPGRSIDTVANTGQYL.

Residues 16 to 91 adopt a coiled-coil conformation; the sequence is EELASQVRLL…KEEVDRLAQP (76 aa). 273–278 serves as a coordination point for ATP; sequence GCGKTL. The segment at 583–584 is docks into pockets in the proteasome alpha-ring; it reads YL.

Belongs to the AAA ATPase family. As to quaternary structure, homohexamer. Assembles into a hexameric ring structure that caps the 20S proteasome core. Strongly interacts with the prokaryotic ubiquitin-like protein Pup through a hydrophobic interface; the interacting region of ARC lies in its N-terminal coiled-coil domain. There is one Pup binding site per ARC hexamer ring. Upon ATP-binding, the C-terminus of ARC interacts with the alpha-rings of the proteasome core, possibly by binding to the intersubunit pockets.

It participates in protein degradation; proteasomal Pup-dependent pathway. In terms of biological role, ATPase which is responsible for recognizing, binding, unfolding and translocation of pupylated proteins into the bacterial 20S proteasome core particle. May be essential for opening the gate of the 20S proteasome via an interaction with its C-terminus, thereby allowing substrate entry and access to the site of proteolysis. Thus, the C-termini of the proteasomal ATPase may function like a 'key in a lock' to induce gate opening and therefore regulate proteolysis. The sequence is that of Proteasome-associated ATPase from Nocardioides sp. (strain ATCC BAA-499 / JS614).